The sequence spans 390 residues: Succinate--CoA ligase [ADP-forming] subunit beta (390 aa).

The 237-residue stretch at 9–245 folds into the ATP-grasp domain; it reads KHLLKKYNIP…TTQEDEHETM (237 aa). ATP contacts are provided by residues K46, 53–55, E99, S102, and E107; that span reads GRG. Mg(2+)-binding residues include N200 and D214. Substrate is bound by residues N265 and 322 to 324; that span reads GIV.

It belongs to the succinate/malate CoA ligase beta subunit family. Heterotetramer of two alpha and two beta subunits. Requires Mg(2+) as cofactor.

It carries out the reaction succinate + ATP + CoA = succinyl-CoA + ADP + phosphate. The catalysed reaction is GTP + succinate + CoA = succinyl-CoA + GDP + phosphate. Its pathway is carbohydrate metabolism; tricarboxylic acid cycle; succinate from succinyl-CoA (ligase route): step 1/1. Succinyl-CoA synthetase functions in the citric acid cycle (TCA), coupling the hydrolysis of succinyl-CoA to the synthesis of either ATP or GTP and thus represents the only step of substrate-level phosphorylation in the TCA. The beta subunit provides nucleotide specificity of the enzyme and binds the substrate succinate, while the binding sites for coenzyme A and phosphate are found in the alpha subunit. The protein is Succinate--CoA ligase [ADP-forming] subunit beta of Coxiella burnetii (strain CbuG_Q212) (Coxiella burnetii (strain Q212)).